Here is a 538-residue protein sequence, read N- to C-terminus: Beta-1-syntrophin (538 aa).

Position 2 is an N-acetylalanine (Ala2). 2 PH domains span residues 19 to 298 (RAQR…SNVN) and 322 to 433 (EIRH…QGCH). Phosphoserine occurs at positions 87, 126, and 205. Residues 112 to 195 (GVKVLKQELG…EVLLEVKYMR (84 aa)) form the PDZ domain. Positions 205–237 (SPVSEIGWETPPPESPRLGGSTSDPPSSQSFSF) are disordered. The residue at position 214 (Thr214) is a Phosphothreonine. A phosphoserine mark is found at Ser219, Ser232, Ser236, and Ser389. The span at 225–236 (STSDPPSSQSFS) shows a compositional bias: low complexity. Positions 482–538 (PYEKLKMSSDDGIRMLYLDFGGKDGEIQLDLHSCPKPIVFIIHSFLSAKITRLGLVA) constitute an SU domain. Positions 518–538 (PIVFIIHSFLSAKITRLGLVA) are calmodulin-binding.

Belongs to the syntrophin family. Monomer and homodimer. Interacts with the other members of the syntrophin family SNTA1 and SNTB2; with the sodium channel proteins SCN4A and SCN5A. Interacts with the viral HTLV-1 TAX protein and with dystrophin protein DMD and related proteins DTNA and UTRN. Interacts with DTNB. Post-translationally, phosphorylated by CaM-kinase II. As to expression, ubiquitous.

It is found in the cell membrane. The protein localises to the sarcolemma. Its subcellular location is the cell junction. The protein resides in the cytoplasm. It localises to the cytoskeleton. Its function is as follows. Adapter protein that binds to and probably organizes the subcellular localization of a variety of membrane proteins. May link various receptors to the actin cytoskeleton and the dystrophin glycoprotein complex. This chain is Beta-1-syntrophin (SNTB1), found in Homo sapiens (Human).